The chain runs to 354 residues: Acyl-CoA-binding domain-containing protein 2 (354 aa).

A helical; Signal-anchor membrane pass occupies residues 11 to 31 (VILGLIFSYLLAKLISIVVTF). The segment at 75-96 (AEQGSSRSDSVAGDDSEEDDDW) is disordered. The span at 86 to 96 (AGDDSEEDDDW) shows a compositional bias: acidic residues. The ACB domain maps to 104–194 (LDEAFSAATL…VTQLYPTWLD (91 aa)). An acyl-CoA contacts are provided by residues 136–140 (YGLYK), lysine 162, and tyrosine 181. ANK repeat units follow at residues 265 to 294 (EGRT…DVNA) and 298 to 327 (EGQT…NTAA).

This sequence belongs to the ACBP family. Interacts (via ankyrin repeats) with HIPP26 and the ethylene-responsive element-binding proteins RAP2-3/EBP and RAP2-12. Interacts with CSE. In terms of tissue distribution, mostly expressed in roots and flowers, and, to a lower extent, in stems, pods and leaves (at protein level).

Its subcellular location is the cell membrane. It is found in the endoplasmic reticulum membrane. The protein resides in the peroxisome membrane. In terms of biological role, binds medium- and long-chain acyl-CoA esters with very high affinity. Can interact in vitro with palmitoyl-CoA, but not with oleoyl-CoA. Binds to lead ions (Pb). May function as an intracellular carrier of acyl-CoA esters. Required for proper phospholipid and, to a lower extent, galactolipid composition. This chain is Acyl-CoA-binding domain-containing protein 2 (ACBP2), found in Arabidopsis thaliana (Mouse-ear cress).